The chain runs to 249 residues: Phosphate import ATP-binding protein PstB (249 aa).

Residues 5–244 form the ABC transporter domain; that stretch reads LRIEDLHFWY…PEKDRTEAYV (240 aa). 37 to 44 lines the ATP pocket; that stretch reads GPSGCGKS.

The protein belongs to the ABC transporter superfamily. Phosphate importer (TC 3.A.1.7) family. The complex is composed of two ATP-binding proteins (PstB), two transmembrane proteins (PstC and PstA) and a solute-binding protein (PstS).

It localises to the cell inner membrane. It carries out the reaction phosphate(out) + ATP + H2O = ADP + 2 phosphate(in) + H(+). Part of the ABC transporter complex PstSACB involved in phosphate import. Responsible for energy coupling to the transport system. This Salinibacter ruber (strain DSM 13855 / M31) protein is Phosphate import ATP-binding protein PstB.